Consider the following 159-residue polypeptide: 2-C-methyl-D-erythritol 2,4-cyclodiphosphate synthase (159 aa).

Residues D10 and H12 each contribute to the a divalent metal cation site. 4-CDP-2-C-methyl-D-erythritol 2-phosphate-binding positions include 10–12 (DVH) and 36–37 (HS). H44 lines the a divalent metal cation pocket. Residues 58–60 (DIG), 134–137 (TTTE), F141, and R144 each bind 4-CDP-2-C-methyl-D-erythritol 2-phosphate.

This sequence belongs to the IspF family. As to quaternary structure, homotrimer. A divalent metal cation serves as cofactor.

It catalyses the reaction 4-CDP-2-C-methyl-D-erythritol 2-phosphate = 2-C-methyl-D-erythritol 2,4-cyclic diphosphate + CMP. The protein operates within isoprenoid biosynthesis; isopentenyl diphosphate biosynthesis via DXP pathway; isopentenyl diphosphate from 1-deoxy-D-xylulose 5-phosphate: step 4/6. Functionally, involved in the biosynthesis of isopentenyl diphosphate (IPP) and dimethylallyl diphosphate (DMAPP), two major building blocks of isoprenoid compounds. Catalyzes the conversion of 4-diphosphocytidyl-2-C-methyl-D-erythritol 2-phosphate (CDP-ME2P) to 2-C-methyl-D-erythritol 2,4-cyclodiphosphate (ME-CPP) with a corresponding release of cytidine 5-monophosphate (CMP). The sequence is that of 2-C-methyl-D-erythritol 2,4-cyclodiphosphate synthase from Bacteroides thetaiotaomicron (strain ATCC 29148 / DSM 2079 / JCM 5827 / CCUG 10774 / NCTC 10582 / VPI-5482 / E50).